A 498-amino-acid chain; its full sequence is ADP,ATP carrier protein 1 (498 aa).

The Cytoplasmic segment spans residues 1–33 (MSTTKSDNYISELRKVIWPIERYENKKFLPMAF). The helical transmembrane segment at 34–54 (MMFCILLNYSTLRSIKDGFVV) threads the bilayer. Cys37 and Cys85 are disulfide-bonded. Topologically, residues 55-67 (TDIGAEAISFLKT) are extracellular. A helical membrane pass occupies residues 68–88 (YIVLPSAVIAMIVYVKLCDIL). Residues 89–92 (KQEN) lie on the Cytoplasmic side of the membrane. A helical membrane pass occupies residues 93–113 (VFYVITSFFLAYFALFAFVLY). Over 114-147 (PNPDLVHPNPEAIESLSLAYPNFKWFIRIVGKWS) the chain is Extracellular. The chain crosses the membrane as a helical span at residues 148-168 (FASFYTMAELWGTLMLSLLFW). The Cytoplasmic portion of the chain corresponds to 169–184 (QFANQITKTDEAKRFY). The chain crosses the membrane as a helical span at residues 185–205 (SMFGLLANLALPVTSLIIGYF). Topologically, residues 206-218 (LHEKTQIVAEHLK) are extracellular. The helical transmembrane segment at 219 to 239 (FTPLFVIMIISSLAVILTYRW) threads the bilayer. The Cytoplasmic portion of the chain corresponds to 240–279 (MNKNVLTDPKLYDPALVKGKKAKAKMSLIESFKMIFTSKY). A helical membrane pass occupies residues 280–300 (VGYIALLLIAYGISVNLVEGV). The Extracellular segment spans residues 301–320 (WKSKLKELHPTKEAYTMYMG). A helical membrane pass occupies residues 321–341 (QFQAYQGWVAIAFMIIGSNIL). Topologically, residues 342–348 (RKVSWLT) are cytoplasmic. A helical membrane pass occupies residues 349 to 369 (AAMITPLMMLITGIAFFAFIF). Residues 370 to 379 (FDSVIAMYLT) lie on the Extracellular side of the membrane. A helical membrane pass occupies residues 380 to 400 (GILASGPLALAVMIGTIQNVL). Over 401-438 (SKGVKYSLFDATKNMAYIPLDKDLRVKGQAAVEVIGGR) the chain is Cytoplasmic. An ATP-binding site is contributed by 436-442 (GGRFGKS). The helical transmembrane segment at 439–459 (FGKSGGAIIQSTFFIIFPALG) threads the bilayer. The Extracellular segment spans residues 460–465 (FVEATP). A helical membrane pass occupies residues 466 to 486 (YFASIFFVIVILWIYAVKGLN). Residues 487–498 (KEYQVLVNNTEK) are Cytoplasmic-facing.

Belongs to the ADP/ATP translocase tlc family.

It is found in the cell membrane. Its function is as follows. Provides the rickettsial cell with host ATP in exchange for rickettsial ADP. This is an obligate exchange system. This energy acquiring activity is an important component of rickettsial parasitism. The polypeptide is ADP,ATP carrier protein 1 (tlcA) (Rickettsia bellii (strain RML369-C)).